Here is a 167-residue protein sequence, read N- to C-terminus: UPF0225 protein VV1358 (167 aa).

Belongs to the UPF0225 family.

This chain is UPF0225 protein VV1358, found in Vibrio vulnificus (strain YJ016).